Here is a 1002-residue protein sequence, read N- to C-terminus: DNA-directed RNA polymerase 1, mitochondrial (1002 aa).

A mitochondrion-targeting transit peptide spans 1–21 (MWRYISKQAYSRKFRNSHDSA). Active-site residues include Asp703, Lys778, and Asp935.

Belongs to the phage and mitochondrial RNA polymerase family. The highest levels of expression are detected in the mature leaves. The level of expression is lowest in the cotyledons.

It localises to the mitochondrion. It catalyses the reaction RNA(n) + a ribonucleoside 5'-triphosphate = RNA(n+1) + diphosphate. Functionally, DNA-dependent RNA polymerase catalyzes the transcription of DNA into RNA using the four ribonucleoside triphosphates as substrates. The protein is DNA-directed RNA polymerase 1, mitochondrial (RPOT1) of Nicotiana sylvestris (Wood tobacco).